The following is a 2392-amino-acid chain: Protein Ycf2 (2392 aa).

ATP is bound at residue 1658–1665 (GPTEIGKS).

It belongs to the Ycf2 family.

The protein localises to the plastid. Its subcellular location is the chloroplast stroma. In terms of biological role, probable ATPase of unknown function. Its presence in a non-photosynthetic plant (Epifagus virginiana) and experiments in tobacco indicate that it has an essential function which is probably not related to photosynthesis. The protein is Protein Ycf2 of Anthoceros angustus (Hornwort).